A 434-amino-acid polypeptide reads, in one-letter code: Enolase (434 aa).

Position 167 (Q167) interacts with (2R)-2-phosphoglycerate. The Proton donor role is filled by E209. 3 residues coordinate Mg(2+): D246, E291, and D318. (2R)-2-phosphoglycerate-binding residues include K343, R372, S373, and K394. The active-site Proton acceptor is the K343.

This sequence belongs to the enolase family. As to quaternary structure, component of the RNA degradosome, a multiprotein complex involved in RNA processing and mRNA degradation. The cofactor is Mg(2+).

The protein resides in the cytoplasm. It localises to the secreted. The protein localises to the cell surface. It catalyses the reaction (2R)-2-phosphoglycerate = phosphoenolpyruvate + H2O. Its pathway is carbohydrate degradation; glycolysis; pyruvate from D-glyceraldehyde 3-phosphate: step 4/5. Its function is as follows. Catalyzes the reversible conversion of 2-phosphoglycerate (2-PG) into phosphoenolpyruvate (PEP). It is essential for the degradation of carbohydrates via glycolysis. This is Enolase from Buchnera aphidicola subsp. Acyrthosiphon pisum (strain 5A).